Here is a 501-residue protein sequence, read N- to C-terminus: Vitamin D 25-hydroxylase (501 aa).

Alanine 250 provides a ligand contact to substrate. Position 448 (cysteine 448) interacts with heme.

This sequence belongs to the cytochrome P450 family. As to quaternary structure, homodimer. It depends on heme as a cofactor. In terms of tissue distribution, highly expressed in the liver and testis.

The protein resides in the endoplasmic reticulum membrane. The protein localises to the microsome membrane. The enzyme catalyses calciol + reduced [NADPH--hemoprotein reductase] + O2 = calcidiol + oxidized [NADPH--hemoprotein reductase] + H2O + H(+). It carries out the reaction vitamin D2 + reduced [NADPH--hemoprotein reductase] + O2 = 25-hydroxyvitamin D2 + oxidized [NADPH--hemoprotein reductase] + H2O + H(+). It catalyses the reaction 1alpha-hydroxyvitamin D2 + reduced [NADPH--hemoprotein reductase] + O2 = 1alpha,25-dihydroxyvitamin D2 + oxidized [NADPH--hemoprotein reductase] + H2O + H(+). The catalysed reaction is alfacalcidol + reduced [NADPH--hemoprotein reductase] + O2 = calcitriol + oxidized [NADPH--hemoprotein reductase] + H2O + H(+). It participates in hormone biosynthesis; vitamin D biosynthesis. Functionally, a cytochrome P450 monooxygenase involved in activation of vitamin D precursors. Catalyzes hydroxylation at C-25 of both forms of vitamin D, vitamin D(2) and D(3) (calciol). Can metabolize vitamin D analogs/prodrugs 1alpha-hydroxyvitamin D(2) (doxercalciferol) and 1alpha-hydroxyvitamin D(3) (alfacalcidol) forming 25-hydroxy derivatives. Mechanistically, uses molecular oxygen inserting one oxygen atom into a substrate, and reducing the second into a water molecule, with two electrons provided by NADPH via cytochrome P450 reductase (CPR; NADPH-ferrihemoprotein reductase). The polypeptide is Vitamin D 25-hydroxylase (Cyp2r1) (Mus musculus (Mouse)).